The sequence spans 675 residues: Heat shock 70 kDa protein, mitochondrial (675 aa).

Residues 1–51 constitute a mitochondrion transit peptide; it reads MAAVLRSLRRRDVASATFSAYRSLTGSTKPAYVAQKWSCLARPFSSRPAGN. Residues 638–675 form a disordered region; that stretch reads VSKIGEHMSGGSSGGSSAGGSQGGGDQAPEAEYEEVKK. The span at 648-663 shows a compositional bias: gly residues; the sequence is GSSGGSSAGGSQGGGD. The span at 666-675 shows a compositional bias: acidic residues; sequence PEAEYEEVKK.

The protein belongs to the heat shock protein 70 family.

The protein resides in the mitochondrion. The chain is Heat shock 70 kDa protein, mitochondrial from Phaseolus vulgaris (Kidney bean).